Reading from the N-terminus, the 485-residue chain is Zinc finger SWIM domain-containing protein 1 (485 aa).

The SWIM-type zinc finger occupies 363–405 (MNIQILEDTHKVQPQPPASCSCYFNQAFHLPCRHILAMLSARR).

This Homo sapiens (Human) protein is Zinc finger SWIM domain-containing protein 1 (ZSWIM1).